We begin with the raw amino-acid sequence, 790 residues long: Lon protease (790 aa).

The Lon N-terminal domain maps to 23–220; sequence LPIMPIFHTV…EITLIVNHQL (198 aa). Position 372–379 (372–379) interacts with ATP; the sequence is GPPGTGKT. The Lon proteolytic domain occupies 608-789; sequence ISKPGIAMGL…REVLNIALSR (182 aa). Catalysis depends on residues Ser-695 and Lys-738.

Belongs to the peptidase S16 family. In terms of assembly, homohexamer. Organized in a ring with a central cavity.

Its subcellular location is the cytoplasm. It carries out the reaction Hydrolysis of proteins in presence of ATP.. ATP-dependent serine protease that mediates the selective degradation of mutant and abnormal proteins as well as certain short-lived regulatory proteins. Required for cellular homeostasis and for survival from DNA damage and developmental changes induced by stress. Degrades polypeptides processively to yield small peptide fragments that are 5 to 10 amino acids long. Binds to DNA in a double-stranded, site-specific manner. This chain is Lon protease, found in Syntrophus aciditrophicus (strain SB).